The primary structure comprises 152 residues: UPF0179 protein Mlab_1307 (152 aa).

The protein belongs to the UPF0179 family.

This is UPF0179 protein Mlab_1307 from Methanocorpusculum labreanum (strain ATCC 43576 / DSM 4855 / Z).